The primary structure comprises 280 residues: Mastin (280 aa).

The signal sequence occupies residues 1–15 (MLWLLVLTAPWLGGS). The propeptide occupies 16–30 (VPISPDPGLRHEQVG). In terms of domain architecture, Peptidase S1 spans 31–275 (IVGGCKVPAR…YVSWIHQHIP (245 aa)). An intrachain disulfide couples Cys-62 to Cys-78. The active-site Charge relay system is the His-77. N-linked (GlcNAc...) asparagine glycans are attached at residues Asn-106 and Asn-117. The active-site Charge relay system is Asp-127. 3 disulfide bridges follow: Cys-161–Cys-234, Cys-194–Cys-215, and Cys-224–Cys-252. Ser-228 acts as the Charge relay system in catalysis.

The protein belongs to the peptidase S1 family. As to quaternary structure, oligomer; disulfide-linked. In terms of processing, N-glycosylated. As to expression, mononuclear cells within skin, intestine, trachea and lung parenchyma, and polymorphonuclear leukocytes within capillaries and blood.

The protein localises to the cytoplasm. Its activity is regulated as follows. Inhibited by leupeptin and bis(5-amidino-2-benzimidazolyl)methane (BABIM). Functionally, trypsin-like serine protease. Has a preference for extended substrates with basic residues at the P1 position; Arg is preferred over Lys. Active towards calcitonin gene-related peptide and gelatin. Not active towards substance P, vasoactive intestinal peptide, type I collagen or azocasein. This is Mastin from Canis lupus familiaris (Dog).